We begin with the raw amino-acid sequence, 598 residues long: NADH-quinone oxidoreductase subunit C/D (598 aa).

The segment at 1-189 is NADH dehydrogenase I subunit C; that stretch reads MTDLTTSDSL…DPYVLTKQKE (189 aa). Residues 213–598 are NADH dehydrogenase I subunit D; it reads DFMFLNLGPN…IDFVMSDVDR (386 aa).

In the N-terminal section; belongs to the complex I 30 kDa subunit family. It in the C-terminal section; belongs to the complex I 49 kDa subunit family. As to quaternary structure, NDH-1 is composed of 13 different subunits. Subunits NuoB, CD, E, F, and G constitute the peripheral sector of the complex.

The protein localises to the cell inner membrane. It catalyses the reaction a quinone + NADH + 5 H(+)(in) = a quinol + NAD(+) + 4 H(+)(out). NDH-1 shuttles electrons from NADH, via FMN and iron-sulfur (Fe-S) centers, to quinones in the respiratory chain. The immediate electron acceptor for the enzyme in this species is believed to be ubiquinone. Couples the redox reaction to proton translocation (for every two electrons transferred, four hydrogen ions are translocated across the cytoplasmic membrane), and thus conserves the redox energy in a proton gradient. The chain is NADH-quinone oxidoreductase subunit C/D from Yersinia pestis bv. Antiqua (strain Angola).